The following is a 642-amino-acid chain: Kinesin-like protein KIF12 (642 aa).

A compositionally biased stretch (basic and acidic residues) spans 1–13 (MEERGSPDGDPAR). The disordered stretch occupies residues 1–25 (MEERGSPDGDPARNLEQGPEGSETP). Residue Ser-6 is modified to Phosphoserine. The region spanning 25–360 (PIQVVLRVRP…LRYASRAQRI (336 aa)) is the Kinesin motor domain. Residue 104-111 (GQTGSGKT) coordinates ATP. Ser-369 carries the post-translational modification Phosphoserine. The stretch at 376–465 (QQVENELLRL…QVHDLERRLL (90 aa)) forms a coiled coil. Disordered stretches follow at residues 531–561 (GHIS…SQSD) and 579–642 (PSAP…LSSC). Positions 538–548 (WPPPWAPPPSP) are enriched in pro residues. The segment covering 610–642 (TLTQQINSSLHLSQRQPQPSEDTQSPGQGLSSC) has biased composition (polar residues). Position 634 is a phosphoserine (Ser-634).

The protein belongs to the TRAFAC class myosin-kinesin ATPase superfamily. Kinesin family. In terms of tissue distribution, expressed in the liver.

It is found in the cytoplasm. The protein resides in the cytoskeleton. The chain is Kinesin-like protein KIF12 (Kif12) from Mus musculus (Mouse).